An 867-amino-acid chain; its full sequence is Mitochondrial escape protein 2 (867 aa).

Disordered stretches follow at residues methionine 1–arginine 20 and arginine 44–glycine 66. The transit peptide at methionine 1 to alanine 41 directs the protein to the mitochondrion. At histidine 42–arginine 308 the chain is on the mitochondrial matrix side. The span at alanine 48–threonine 59 shows a compositional bias: low complexity. One can recognise an RRM domain in the interval serine 203–arginine 293. The chain crosses the membrane as a helical span at residues isoleucine 309–isoleucine 329. The Mitochondrial intermembrane portion of the chain corresponds to arginine 330 to glycine 867. Basic and acidic residues predominate over residues phenylalanine 614 to serine 639. A disordered region spans residues phenylalanine 614–proline 647. Residues leucine 797–methionine 857 are a coiled coil.

It belongs to the YME2 family.

Its subcellular location is the mitochondrion inner membrane. Its function is as follows. Plays a role in maintaining the mitochondrial genome and in controlling the mtDNA escape. Involved in the regulation of mtDNA nucleotide structure and number. May have a dispensable role in early maturation of pre-rRNA. The protein is Mitochondrial escape protein 2 (msp-45) of Neurospora crassa (strain ATCC 24698 / 74-OR23-1A / CBS 708.71 / DSM 1257 / FGSC 987).